The chain runs to 503 residues: Arabinose import ATP-binding protein AraG (503 aa).

ABC transporter domains follow at residues 5-240 (LRFD…MVGR) and 253-497 (LGDV…LPQG). ATP is bound at residue 37–44 (GENGAGKS).

The protein belongs to the ABC transporter superfamily. Arabinose importer (TC 3.A.1.2.2) family. In terms of assembly, the complex is composed of two ATP-binding proteins (AraG), two transmembrane proteins (AraH) and a solute-binding protein (AraF).

It is found in the cell inner membrane. The enzyme catalyses L-arabinose(out) + ATP + H2O = L-arabinose(in) + ADP + phosphate + H(+). Its function is as follows. Part of the ABC transporter complex AraFGH involved in arabinose import. Responsible for energy coupling to the transport system. The sequence is that of Arabinose import ATP-binding protein AraG from Burkholderia pseudomallei (strain 1710b).